The sequence spans 224 residues: Proline/serine-rich protein C17A5.10 (224 aa).

Pro residues predominate over residues 1-10 (MTDDSVPPPS). Positions 1 to 110 (MTDDSVPPPS…SNYNTAKPPY (110 aa)) are disordered. Over residues 31–52 (TSTSAGHPSSSSSTLPNYAASS) the composition is skewed to low complexity. Polar residues-rich tracts occupy residues 53–68 (LNSRPVSSSGSGNAYS), 77–94 (PTSQRPNSWQPGNASTMY), and 101–110 (SNYNTAKPPY).

This sequence belongs to the HUA1 family.

The protein resides in the cytoplasm. In terms of biological role, may be involved in assembly and disassembly of the actin cytoskeleton. The chain is Proline/serine-rich protein C17A5.10 from Schizosaccharomyces pombe (strain 972 / ATCC 24843) (Fission yeast).